The chain runs to 211 residues: Probable GTP-binding protein EngB (211 aa).

The EngB-type G domain occupies 21–197; sequence TAPEFAFLGR…WGEIHRVAAE (177 aa). GTP-binding positions include 29–36, 55–59, 80–83, 147–150, and 176–178; these read GRSNVGKS, GRTRA, DLPG, TKAD, and CSA. The Mg(2+) site is built by serine 36 and threonine 57.

The protein belongs to the TRAFAC class TrmE-Era-EngA-EngB-Septin-like GTPase superfamily. EngB GTPase family. Mg(2+) is required as a cofactor.

In terms of biological role, necessary for normal cell division and for the maintenance of normal septation. This Acidobacterium capsulatum (strain ATCC 51196 / DSM 11244 / BCRC 80197 / JCM 7670 / NBRC 15755 / NCIMB 13165 / 161) protein is Probable GTP-binding protein EngB.